The chain runs to 35 residues: Thionin NsW2 (35 aa).

Intrachain disulfides connect C4-C32, C12-C30, and C16-C26.

Contains 4 disulfide bonds.

It is found in the secreted. In terms of biological role, antimicrobial peptide disrupting membranes. Has antibacterial against Gram-positive bacteria S.aureus (MIC=6.5 uM) and B.subtilis (MIC=3.25 uM) but not against Gram-negative bacterium E.coli. Has antifungal activity against C.albicans (MIC=3.25 uM). This Nigella sativa (Black cumin) protein is Thionin NsW2.